The primary structure comprises 257 residues: Pyridoxine 5'-phosphate synthase (257 aa).

N16 lines the 3-amino-2-oxopropyl phosphate pocket. Residue 18 to 19 participates in 1-deoxy-D-xylulose 5-phosphate binding; the sequence is DH. Residue R27 coordinates 3-amino-2-oxopropyl phosphate. H52 functions as the Proton acceptor in the catalytic mechanism. 1-deoxy-D-xylulose 5-phosphate contacts are provided by R54 and H59. Residue E79 is the Proton acceptor of the active site. T109 is a 1-deoxy-D-xylulose 5-phosphate binding site. H200 serves as the catalytic Proton donor. Residues G201 and 222 to 223 contribute to the 3-amino-2-oxopropyl phosphate site; that span reads GH.

Belongs to the PNP synthase family. In terms of assembly, homooctamer; tetramer of dimers.

Its subcellular location is the cytoplasm. The enzyme catalyses 3-amino-2-oxopropyl phosphate + 1-deoxy-D-xylulose 5-phosphate = pyridoxine 5'-phosphate + phosphate + 2 H2O + H(+). It participates in cofactor biosynthesis; pyridoxine 5'-phosphate biosynthesis; pyridoxine 5'-phosphate from D-erythrose 4-phosphate: step 5/5. Functionally, catalyzes the complicated ring closure reaction between the two acyclic compounds 1-deoxy-D-xylulose-5-phosphate (DXP) and 3-amino-2-oxopropyl phosphate (1-amino-acetone-3-phosphate or AAP) to form pyridoxine 5'-phosphate (PNP) and inorganic phosphate. The polypeptide is Pyridoxine 5'-phosphate synthase (Burkholderia pseudomallei (strain K96243)).